An 86-amino-acid chain; its full sequence is Small ribosomal subunit protein bS16 (86 aa).

Belongs to the bacterial ribosomal protein bS16 family.

This is Small ribosomal subunit protein bS16 from Bordetella petrii (strain ATCC BAA-461 / DSM 12804 / CCUG 43448).